We begin with the raw amino-acid sequence, 261 residues long: Phosphate import ATP-binding protein PstB 4 (261 aa).

The ABC transporter domain occupies 8 to 256 (IKVNNLSFYY…PHDSRTREYV (249 aa)). 40-47 (GPSGCGKS) lines the ATP pocket.

This sequence belongs to the ABC transporter superfamily. Phosphate importer (TC 3.A.1.7) family. As to quaternary structure, the complex is composed of two ATP-binding proteins (PstB), two transmembrane proteins (PstC and PstA) and a solute-binding protein (PstS).

It localises to the cell inner membrane. The catalysed reaction is phosphate(out) + ATP + H2O = ADP + 2 phosphate(in) + H(+). Its function is as follows. Part of the ABC transporter complex PstSACB involved in phosphate import. Responsible for energy coupling to the transport system. The sequence is that of Phosphate import ATP-binding protein PstB 4 from Trichormus variabilis (strain ATCC 29413 / PCC 7937) (Anabaena variabilis).